Here is a 357-residue protein sequence, read N- to C-terminus: Glucose 1-dehydrogenase (357 aa).

Asp-38 serves as a coordination point for Zn(2+). Substrate contacts are provided by Thr-40 and His-49. Zn(2+)-binding residues include His-63 and Glu-64. Substrate is bound by residues Glu-114 and Glu-150. Glu-150 contributes to the Zn(2+) binding site. Residues 181–184 (NGSL), 207–208 (RR), Ser-228, 272–274 (LGV), and 301–303 (SVN) contribute to the NADP(+) site. Asn-303 is a binding site for substrate.

This sequence belongs to the zinc-containing alcohol dehydrogenase family. Glucose 1-dehydrogenase subfamily. As to quaternary structure, homodimer. Zn(2+) is required as a cofactor.

The catalysed reaction is D-glucose + NAD(+) = D-glucono-1,5-lactone + NADH + H(+). The enzyme catalyses D-glucose + NADP(+) = D-glucono-1,5-lactone + NADPH + H(+). Activated by molar concentrations of KCl or NaCl. Inhibited by EDTA in vitro. In terms of biological role, catalyzes the NAD(P)(+)-dependent oxidation of D-glucose to D-gluconate. Displays broad substrate specificity since it is able to catalyze the oxidation of a number of alternative aldose sugars, such as D-xylose, D-galactose, and D-fucose, to the corresponding glyconate. Can utilize both NAD(+) and NADP(+) as electron acceptor, with a preference for NADP(+). Physiologically, seems to be involved in the degradation of glucose through a modified Entner-Doudoroff pathway. This Haloferax mediterranei (strain ATCC 33500 / DSM 1411 / JCM 8866 / NBRC 14739 / NCIMB 2177 / R-4) (Halobacterium mediterranei) protein is Glucose 1-dehydrogenase.